The primary structure comprises 379 residues: 8-amino-7-oxononanoate synthase (379 aa).

Substrate contacts are provided by Arg-27 and Arg-34. 114 to 115 provides a ligand contact to pyridoxal 5'-phosphate; that stretch reads GY. Substrate is bound at residue His-139. Residues Ser-187, 212-215, and 232-235 each bind pyridoxal 5'-phosphate; these read DDAH and TLSK. At Lys-235 the chain carries N6-(pyridoxal phosphate)lysine. Thr-344 lines the substrate pocket.

This sequence belongs to the class-II pyridoxal-phosphate-dependent aminotransferase family. BioF subfamily. Homodimer. The cofactor is pyridoxal 5'-phosphate.

The catalysed reaction is 6-carboxyhexanoyl-[ACP] + L-alanine + H(+) = (8S)-8-amino-7-oxononanoate + holo-[ACP] + CO2. Its pathway is cofactor biosynthesis; biotin biosynthesis. Catalyzes the decarboxylative condensation of pimeloyl-[acyl-carrier protein] and L-alanine to produce 8-amino-7-oxononanoate (AON), [acyl-carrier protein], and carbon dioxide. This Methylobacterium sp. (strain 4-46) protein is 8-amino-7-oxononanoate synthase.